The following is a 546-amino-acid chain: DNA replication factor Cdt1 (546 aa).

Positions 1–11 (MEQRRVTDFFA) are enriched in basic and acidic residues. A PIP-box K+4 motif motif is present at residues 1-23 (MEQRRVTDFFARRRPGPPRIAPP). Disordered stretches follow at residues 1–118 (MEQR…QDQD) and 143–165 (SAQD…PCGE). Residues 28–45 (RTPSPARPALRAPASATS) are compositionally biased toward low complexity. A Phosphothreonine; by MAPK8 modification is found at Thr29. Residue Ser31 is modified to Phosphoserine. A Cyclin-binding motif motif is present at residues 68 to 70 (RRL). Ser93 is subject to Phosphoserine; by MAPK8. The segment at 150–190 (SCTPEAEGRPEEPCGEKAPAYQRFHALAQPGLPGLVLPYKY) is interaction with GMNN. Basic and acidic residues predominate over residues 155-164 (AEGRPEEPCG). At Ser318 the chain carries Phosphoserine; by MAPK8. Residues Ser380 and Ser394 each carry the phosphoserine modification. A disordered region spans residues 383–415 (ALRSAAPSSPGSPRPALPATPPATPPAASPSAL). Residues 392–410 (PGSPRPALPATPPATPPAA) show a composition bias toward pro residues. Residues 451-546 (LERLPELARV…AHQTRAEEGL (96 aa)) form an interaction with LRWD1 region.

This sequence belongs to the Cdt1 family. Interacts with GMNN; the interaction inhibits binding of the MCM complex to origins of replication. Interacts with MCM6. Interacts with CDC6; are mutually dependent on one another for loading MCM complexes onto chromatin. Interacts with PCNA. Interacts with LRWD1 during G1 phase and during mitosis. Interacts with NDC80 subunit of the NDC80 complex; leading to kinetochore localization. Interacts with GRWD1; origin binding of GRWD1 is dependent on CDT1. Interacts with KAT7. Interacts with ubiquitin-binding protein FAF1; the interaction is likely to promote CDT1 degradation. In terms of processing, two independent E3 ubiquitin ligase complexes, SCF(SKP2) and the DCX(DTL) complex, mediated CDT1 degradation in S phase. Ubiquitinated by the DCX(DTL) complex, in response to DNA damage, leading to its degradation. Ubiquitination by the DCX(DTL) complex is necessary to ensure proper cell cycle regulation and is PCNA-dependent: interacts with PCNA via its PIP-box, while the presence of the containing the 'K+4' motif in the PIP box, recruit the DCX(DTL) complex, leading to its degradation. Phosphorylation at Thr-29 by CDK2 targets CDT1 for ubiquitination by SCF(SKP2) E3 ubiquitin ligase and subsequent degradation. The interaction with GMNN protects it against ubiquitination. Deubiquitinated by USP37. Ubiquitinated and degraded by the SCF(FBXO31) complex during the G2 phase to prevent re-replication. Post-translationally, phosphorylation by cyclin A-dependent kinases at Thr-29 targets CDT1 for ubiquitynation by SCF(SKP2) E3 ubiquitin ligase and subsequent degradation. Phosphorylated at Thr-29 by MAPK8/JNK1, which blocks replication licensing in response to stress. Binding to GMNN is not affected by phosphorylation.

Its subcellular location is the nucleus. It localises to the chromosome. The protein localises to the centromere. The protein resides in the kinetochore. In terms of biological role, required for both DNA replication and mitosis. DNA replication licensing factor, required for pre-replication complex assembly. Cooperates with CDC6 and the origin recognition complex (ORC) during G1 phase of the cell cycle to promote the loading of the mini-chromosome maintenance (MCM) complex onto DNA to generate pre-replication complexes (pre-RC). Required also for mitosis by promoting stable kinetochore-microtubule attachments. Potential oncogene. In Homo sapiens (Human), this protein is DNA replication factor Cdt1.